The following is a 218-amino-acid chain: Trichothecene biosynthesis transcription regulator TRI6 (218 aa).

The disordered stretch occupies residues 154–181; sequence SQSTNDPGDAGKKGFATRKDRARHEAKH. A compositionally biased stretch (basic and acidic residues) spans 162 to 176; it reads DAGKKGFATRKDRAR. The C2H2-type zinc finger occupies 185 to 215; the sequence is IRCQWRDNNGDQCTRTFSRMDNMRDHFRRIH.

Its subcellular location is the nucleus. Transcriptional activator of part of the trichothecene biosynthesis cluster that mediates the production of the antimicrobial trichothecene harzianum A (HA) that plays a role in Botrytis cinerea antagonistic activity and plant defense priming. Regulates expression of both trichothecene and mevalonate pathway genes. The sequence is that of Trichothecene biosynthesis transcription regulator TRI6 from Trichoderma arundinaceum.